A 493-amino-acid chain; its full sequence is Glutamyl-tRNA(Gln) amidotransferase subunit A (493 aa).

Residues Lys79 and Ser159 each act as charge relay system in the active site. Ser183 serves as the catalytic Acyl-ester intermediate.

This sequence belongs to the amidase family. GatA subfamily. Heterotrimer of A, B and C subunits.

It catalyses the reaction L-glutamyl-tRNA(Gln) + L-glutamine + ATP + H2O = L-glutaminyl-tRNA(Gln) + L-glutamate + ADP + phosphate + H(+). Allows the formation of correctly charged Gln-tRNA(Gln) through the transamidation of misacylated Glu-tRNA(Gln) in organisms which lack glutaminyl-tRNA synthetase. The reaction takes place in the presence of glutamine and ATP through an activated gamma-phospho-Glu-tRNA(Gln). The protein is Glutamyl-tRNA(Gln) amidotransferase subunit A of Rhizobium etli (strain ATCC 51251 / DSM 11541 / JCM 21823 / NBRC 15573 / CFN 42).